The primary structure comprises 202 residues: Small ribosomal subunit protein uS4 (202 aa).

The S4 RNA-binding domain occupies S94–L157.

The protein belongs to the universal ribosomal protein uS4 family. Part of the 30S ribosomal subunit. Contacts protein S5. The interaction surface between S4 and S5 is involved in control of translational fidelity.

In terms of biological role, one of the primary rRNA binding proteins, it binds directly to 16S rRNA where it nucleates assembly of the body of the 30S subunit. Its function is as follows. With S5 and S12 plays an important role in translational accuracy. In Ureaplasma parvum serovar 3 (strain ATCC 27815 / 27 / NCTC 11736), this protein is Small ribosomal subunit protein uS4.